The chain runs to 272 residues: Undecaprenyl-diphosphatase (272 aa).

A run of 8 helical transmembrane segments spans residues 5–25 (YSLF…FLPV), 45–65 (AKTF…VVFW), 88–108 (HLTL…GLAF), 114–134 (ALFD…LLLA), 153–172 (YRQA…PGFS), 189–209 (YAAS…ASGL), 221–241 (GDLP…LIAI), and 251–271 (ISFV…YWVF).

Belongs to the UppP family.

It localises to the cell inner membrane. It carries out the reaction di-trans,octa-cis-undecaprenyl diphosphate + H2O = di-trans,octa-cis-undecaprenyl phosphate + phosphate + H(+). Its function is as follows. Catalyzes the dephosphorylation of undecaprenyl diphosphate (UPP). Confers resistance to bacitracin. The chain is Undecaprenyl-diphosphatase from Yersinia pseudotuberculosis serotype IB (strain PB1/+).